A 62-amino-acid chain; its full sequence is Large ribosomal subunit protein uL29 (62 aa).

The protein belongs to the universal ribosomal protein uL29 family.

In Geotalea daltonii (strain DSM 22248 / JCM 15807 / FRC-32) (Geobacter daltonii), this protein is Large ribosomal subunit protein uL29.